Reading from the N-terminus, the 140-residue chain is Putative peptidyl-tRNA hydrolase PTRHD1 (140 aa).

This sequence belongs to the PTH2 family. PTRHD1 subfamily.

It carries out the reaction an N-acyl-L-alpha-aminoacyl-tRNA + H2O = an N-acyl-L-amino acid + a tRNA + H(+). Its function is as follows. As a putative peptidyl-tRNA hydrolase, it might be involved in releasing tRNAs from the ribosome during protein synthesis. Some evidence, however, suggests that it lacks peptidyl-tRNA hydrolase activity. The polypeptide is Putative peptidyl-tRNA hydrolase PTRHD1 (PTRHD1) (Homo sapiens (Human)).